We begin with the raw amino-acid sequence, 801 residues long: DNA mismatch repair protein MutS (801 aa).

G590–S597 is an ATP binding site.

Belongs to the DNA mismatch repair MutS family.

This protein is involved in the repair of mismatches in DNA. It is possible that it carries out the mismatch recognition step. This protein has a weak ATPase activity. The protein is DNA mismatch repair protein MutS of Thermotoga neapolitana (strain ATCC 49049 / DSM 4359 / NBRC 107923 / NS-E).